The chain runs to 442 residues: tRNA(Ile)-lysidine synthase (442 aa).

30–35 (SGGLDS) is a binding site for ATP.

The protein belongs to the tRNA(Ile)-lysidine synthase family.

Its subcellular location is the cytoplasm. It catalyses the reaction cytidine(34) in tRNA(Ile2) + L-lysine + ATP = lysidine(34) in tRNA(Ile2) + AMP + diphosphate + H(+). Functionally, ligates lysine onto the cytidine present at position 34 of the AUA codon-specific tRNA(Ile) that contains the anticodon CAU, in an ATP-dependent manner. Cytidine is converted to lysidine, thus changing the amino acid specificity of the tRNA from methionine to isoleucine. The sequence is that of tRNA(Ile)-lysidine synthase from Pseudomonas fluorescens (strain Pf0-1).